We begin with the raw amino-acid sequence, 333 residues long: NADH-quinone oxidoreductase subunit H (333 aa).

A run of 8 helical transmembrane segments spans residues 17-37 (IFFA…TYGI), 88-108 (FILA…ALPF), 117-137 (IGVG…GVVT), 159-179 (ISYE…SGSL), 191-211 (VWFI…AVAE), 241-261 (FFML…TVLF), 273-293 (FIPG…LFIW), and 313-333 (VLLP…QLFF).

The protein belongs to the complex I subunit 1 family. In terms of assembly, NDH-1 is composed of 14 different subunits. Subunits NuoA, H, J, K, L, M, N constitute the membrane sector of the complex.

The protein resides in the cell membrane. The enzyme catalyses a quinone + NADH + 5 H(+)(in) = a quinol + NAD(+) + 4 H(+)(out). NDH-1 shuttles electrons from NADH, via FMN and iron-sulfur (Fe-S) centers, to quinones in the respiratory chain. The immediate electron acceptor for the enzyme in this species is believed to be ubiquinone. Couples the redox reaction to proton translocation (for every two electrons transferred, four hydrogen ions are translocated across the cytoplasmic membrane), and thus conserves the redox energy in a proton gradient. This subunit may bind ubiquinone. In Anoxybacillus flavithermus (strain DSM 21510 / WK1), this protein is NADH-quinone oxidoreductase subunit H.